Here is a 175-residue protein sequence, read N- to C-terminus: UPF0398 protein SPP_0409 (175 aa).

This sequence belongs to the UPF0398 family.

This chain is UPF0398 protein SPP_0409, found in Streptococcus pneumoniae (strain P1031).